The primary structure comprises 101 residues: Small ribosomal subunit protein uS14 (101 aa).

This sequence belongs to the universal ribosomal protein uS14 family. Part of the 30S ribosomal subunit. Contacts proteins S3 and S10.

Binds 16S rRNA, required for the assembly of 30S particles and may also be responsible for determining the conformation of the 16S rRNA at the A site. This chain is Small ribosomal subunit protein uS14, found in Ehrlichia canis (strain Jake).